A 437-amino-acid polypeptide reads, in one-letter code: uncharacterized protein (437 aa).

Positions 63–87 (PSSANVSFQNSDDNLSTSRGRSASP) are enriched in polar residues. Disordered stretches follow at residues 63–97 (PSSA…SNFP), 112–147 (VKKD…KKET), and 346–437 (PKNA…YSIW). Residues 399-409 (EALSPSKSNPD) show a composition bias toward polar residues. The segment covering 425 to 437 (KKPSSSSSNYSIW) has biased composition (low complexity).

This is an uncharacterized protein from Caenorhabditis elegans.